The sequence spans 1135 residues: DNA-directed RNA polymerase I subunit RPA2 (1135 aa).

The tract at residues 1 to 24 (MDPGSRWRNLPSGPSLKHLTDPSY) is disordered. RNA is bound at residue Arg180. A loop B region spans residues 194-208 (IRPKWKTRGPGYTQY). Residues 236–247 (LNFIYRKELFFL) form a loop A region. Position 367 (Asp367) interacts with RNA. Fork loop regions lie at residues 439–453 (LRSKTGLGLLQDSGL) and 474–489 (RGADFAKMRTTTVRRL). Asp755 lines the Mg(2+) pocket. An RNA-binding site is contributed by Lys890. Residues Arg1020 and Arg1036 each contribute to the DNA site. Position 1051 is a phosphoserine (Ser1051). Zn(2+) is bound by residues Cys1070, Cys1073, Cys1098, and Cys1101. A C4-type zinc finger spans residues 1070-1101 (CVKCGSLLSPLLEKPPPSWSAMRNRKYNCTLC).

This sequence belongs to the RNA polymerase beta chain family. Component of the RNA polymerase I (Pol I) complex consisting of 13 subunits: a ten-subunit catalytic core composed of POLR1A/RPA1, POLR1B/RPA2, POLR1C/RPAC1, POLR1D/RPAC2, POLR1H/RPA12, POLR2E/RPABC1, POLR2F/RPABC2, POLR2H/RPABC3, POLR2K/RPABC4 and POLR2L/RPABC5; a mobile stalk subunit POLR1F/RPA43 protruding from the core and additional subunits homologous to general transcription factors POLR1E/RPA49 and POLR1G/RPA34. Part of Pol I pre-initiation complex (PIC), in which Pol I core assembles with RRN3 and promoter-bound UTBF and SL1/TIF-IB complex. Mg(2+) serves as cofactor.

The protein resides in the nucleus. It localises to the nucleolus. It is found in the chromosome. It carries out the reaction RNA(n) + a ribonucleoside 5'-triphosphate = RNA(n+1) + diphosphate. Functionally, catalytic core component of RNA polymerase I (Pol I), a DNA-dependent RNA polymerase which synthesizes ribosomal RNA precursors using the four ribonucleoside triphosphates as substrates. Transcribes 47S pre-rRNAs from multicopy rRNA gene clusters, giving rise to 5.8S, 18S and 28S ribosomal RNAs. Pol I-mediated transcription cycle proceeds through transcription initiation, transcription elongation and transcription termination stages. During transcription initiation, Pol I pre-initiation complex (PIC) is recruited by the selectivity factor 1 (SL1/TIF-IB) complex bound to the core promoter that precedes an rDNA repeat unit. The PIC assembly bends the promoter favoring the formation of the transcription bubble and promoter escape. Once the polymerase has escaped from the promoter it enters the elongation phase during which RNA is actively polymerized, based on complementarity with the template DNA strand. Highly processive, assembles in structures referred to as 'Miller trees' where many elongating Pol I complexes queue and transcribe the same rDNA coding regions. At terminator sequences downstream of the rDNA gene, PTRF interacts with Pol I and halts Pol I transcription leading to the release of the RNA transcript and polymerase from the DNA. Forms Pol I active center together with the largest subunit POLR1A/RPA1. Appends one nucleotide at a time to the 3' end of the nascent RNA, with POLR1A/RPA1 contributing a Mg(2+)-coordinating DxDGD motif, and POLR1B/RPA2 participating in the coordination of a second Mg(2+) ion and providing lysine residues believed to facilitate Watson-Crick base pairing between the incoming nucleotide and the template base. Typically, Mg(2+) ions direct a 5' nucleoside triphosphate to form a phosphodiester bond with the 3' hydroxyl of the preceding nucleotide of the nascent RNA, with the elimination of pyrophosphate. Has proofreading activity: Pauses and backtracks to allow the cleavage of a missincorporated nucleotide via POLR1H/RPA12. High Pol I processivity is associated with decreased transcription fidelity. The sequence is that of DNA-directed RNA polymerase I subunit RPA2 from Homo sapiens (Human).